A 345-amino-acid chain; its full sequence is MTNMMKALVKTKPEVGLWMERVPVPEVGPNDVLIRVKKSAICGTDVHIWNWDQWAQKTIPVPMVVGHEFMGEIAEVGSAVTKHHVGERVSGEGHIVCGKCRNCRAGRGHLCRNTLGVGVNRPGSFAEFVCLPEYNVVTIPDDVPDEIAAIFDPFGNAVHTALSFDLVGEDVLVTGAGPIGIMGALVAKRSGARKVVITDINPVRLDLARKLGIDHVVDASKENLADVMRSIGMTEGFDVGLEMSGAAPAFRDMIDKMNNGGKIAILGIAPAGFEIDWNKVIFKMLNLKGIYGREMFETWYKMIAFVQGGLDLAPVITHRIGIDAFRDGFEAMRSGNSGKVVMDWI.

Cysteine 42 is a binding site for Zn(2+). Residues threonine 44 and histidine 47 each act as charge relay system in the active site. The Zn(2+) site is built by histidine 67, glutamate 68, cysteine 97, cysteine 100, cysteine 103, and cysteine 111. Residues isoleucine 179, aspartate 199, arginine 204, 266–268, and 290–291 contribute to the NAD(+) site; these read LGI and IY.

The protein belongs to the zinc-containing alcohol dehydrogenase family. Homotetramer. Requires Zn(2+) as cofactor.

It localises to the cytoplasm. The catalysed reaction is L-threonine + NAD(+) = (2S)-2-amino-3-oxobutanoate + NADH + H(+). Its pathway is amino-acid degradation; L-threonine degradation via oxydo-reductase pathway; glycine from L-threonine: step 1/2. Functionally, catalyzes the NAD(+)-dependent oxidation of L-threonine to 2-amino-3-ketobutyrate. The sequence is that of L-threonine 3-dehydrogenase from Sinorhizobium fredii (strain NBRC 101917 / NGR234).